The primary structure comprises 259 residues: Expansin-B4 (259 aa).

Positions 1 to 23 are cleaved as a signal peptide; that stretch reads MASSQRYFALLALFAVSLKFCYC. N25 carries N-linked (GlcNAc...) asparagine glycosylation. Residues 51–161 enclose the Expansin-like EG45 domain; it reads GGACGYGSAV…KRAACLYRGT (111 aa). 3 cysteine pairs are disulfide-bonded: C54/C83, C86/C156, and C91/C97. The 82-residue stretch at 174 to 255 folds into the Expansin-like CBD domain; that stretch reads YYISFVVEYE…NWKPDESYRS (82 aa).

The protein belongs to the expansin family. Expansin B subfamily.

Its subcellular location is the secreted. The protein resides in the cell wall. The protein localises to the membrane. May cause loosening and extension of plant cell walls by disrupting non-covalent bonding between cellulose microfibrils and matrix glucans. No enzymatic activity has been found. In Arabidopsis thaliana (Mouse-ear cress), this protein is Expansin-B4 (EXPB4).